The chain runs to 160 residues: Small ribosomal subunit protein bS6 (160 aa).

This sequence belongs to the bacterial ribosomal protein bS6 family.

Functionally, binds together with bS18 to 16S ribosomal RNA. The protein is Small ribosomal subunit protein bS6 of Ureaplasma parvum serovar 3 (strain ATCC 27815 / 27 / NCTC 11736).